We begin with the raw amino-acid sequence, 647 residues long: Protein cueball (647 aa).

A signal peptide spans 1 to 22; it reads MLWCPSVLVPLIAVAACLPVLA. Residues 23–534 lie on the Extracellular side of the membrane; the sequence is IGTPLEWEFA…CMTPSPWTSN (512 aa). Asn-80 and Asn-106 each carry an N-linked (GlcNAc...) asparagine glycan. 3 LDL-receptor class B repeats span residues 119–166, 167–211, and 212–257; these read RNLF…DVCR, RKLY…DQLS, and DRIF…TNDA. A glycan (N-linked (GlcNAc...) asparagine) is linked at Asn-175. Asn-316 carries an N-linked (GlcNAc...) asparagine glycan. EGF-like domains lie at 365–401 and 436–473; these read DEKTAQLERDHCLNGGTYIADRVLCICPTGFKGSRCE and EISKCSGLCLNGGHCKLEDISEKPSCECPHNFAGERCE. 5 disulfides stabilise this stretch: Cys-376-Cys-389, Cys-391-Cys-400, Cys-440-Cys-450, Cys-444-Cys-461, and Cys-463-Cys-472. Asn-475 carries an N-linked (GlcNAc...) asparagine glycan. The helical transmembrane segment at 535–555 threads the bilayer; that stretch reads VIIVLVLGIVSCFFLVAVIVH. Topologically, residues 556–647 are cytoplasmic; the sequence is GFRRLYKPKR…LIHNMDDDLY (92 aa).

This sequence belongs to the cueball family.

It is found in the cell membrane. Has a role in spermatogenesis and oogenesis. The polypeptide is Protein cueball (Drosophila persimilis (Fruit fly)).